The sequence spans 493 residues: Probable polyol transporter 6 (493 aa).

The next 12 helical transmembrane spans lie at 25–45, 54–74, 85–105, 116–136, 142–162, 177–197, 275–295, 313–333, 343–363, 372–392, 414–434, and 444–464; these read SIVSIIFGYDTGVMSGAMVFI, VQIEVLTGILNLCALVGSLLA, YTIVLASILFMLGSILMGWGP, TAGLGVGFALMVAPVYSAEIA, GLLASLPHLCISIGILLGYIV, LMLGIAAVPSLVLAFGILKMP, VLLTALGIHFFQHASGIEAVL, LFLVTIGVGIMKTTFIFTATL, LLLTSVGGMVIALTMLGFGLT, LAWALVLSIVAAYSFVAFFSI, GASLGVAVNRVMNATVSMSFL, and GAFFMFAGVAAVAWNFFFFLL.

The protein belongs to the major facilitator superfamily. Sugar transporter (TC 2.A.1.1) family.

It localises to the membrane. In terms of biological role, plasma membrane sugar-proton symporter. This is Probable polyol transporter 6 (PLT6) from Arabidopsis thaliana (Mouse-ear cress).